A 343-amino-acid polypeptide reads, in one-letter code: Aspartate-semialdehyde dehydrogenase (343 aa).

Residues 13–16 (TGAV) and 41–42 (KS) each bind NADP(+). Arg103 is a binding site for phosphate. Cys134 serves as the catalytic Acyl-thioester intermediate. Gln161 contributes to the substrate binding site. Residue 164 to 165 (SG) participates in NADP(+) binding. Residue Lys220 participates in phosphate binding. Arg241 is a substrate binding site. Residue His248 is the Proton acceptor of the active site. Gln321 serves as a coordination point for NADP(+).

Belongs to the aspartate-semialdehyde dehydrogenase family. As to quaternary structure, homodimer.

It carries out the reaction L-aspartate 4-semialdehyde + phosphate + NADP(+) = 4-phospho-L-aspartate + NADPH + H(+). The protein operates within amino-acid biosynthesis; L-lysine biosynthesis via DAP pathway; (S)-tetrahydrodipicolinate from L-aspartate: step 2/4. It participates in amino-acid biosynthesis; L-methionine biosynthesis via de novo pathway; L-homoserine from L-aspartate: step 2/3. It functions in the pathway amino-acid biosynthesis; L-threonine biosynthesis; L-threonine from L-aspartate: step 2/5. Functionally, catalyzes the NADPH-dependent formation of L-aspartate-semialdehyde (L-ASA) by the reductive dephosphorylation of L-aspartyl-4-phosphate. This chain is Aspartate-semialdehyde dehydrogenase, found in Campylobacter jejuni subsp. jejuni serotype O:2 (strain ATCC 700819 / NCTC 11168).